Reading from the N-terminus, the 642-residue chain is Ribosome biogenesis protein BOP1 homolog (642 aa).

Residues 1–28 form a disordered region; the sequence is MIHKRMNSTELERTSKKIDDYDSSDEED. The span at 10 to 20 shows a compositional bias: basic and acidic residues; that stretch reads ELERTSKKIDD. WD repeat units lie at residues 311-351, 353-393, 472-510, 513-552, 556-595, and 612-642; these read GHSG…CLKT, SLDG…DRHR, RLKG…LKKK, TGSQ…KPWK, HHTA…DSLK, and KNGL…ALFT.

It belongs to the WD repeat BOP1/ERB1 family.

The protein resides in the nucleus. Its subcellular location is the nucleolus. The protein localises to the nucleoplasm. In terms of biological role, required for maturation of ribosomal RNAs and formation of the large ribosomal subunit. This is Ribosome biogenesis protein BOP1 homolog from Brugia malayi (Filarial nematode worm).